The following is a 270-amino-acid chain: Elongation factor Ts (270 aa).

An involved in Mg(2+) ion dislocation from EF-Tu region spans residues 77–80 (TDFV).

This sequence belongs to the EF-Ts family.

It is found in the cytoplasm. Functionally, associates with the EF-Tu.GDP complex and induces the exchange of GDP to GTP. It remains bound to the aminoacyl-tRNA.EF-Tu.GTP complex up to the GTP hydrolysis stage on the ribosome. The polypeptide is Elongation factor Ts (Nocardioides sp. (strain ATCC BAA-499 / JS614)).